Consider the following 141-residue polypeptide: Aspartate 1-decarboxylase (141 aa).

The Schiff-base intermediate with substrate; via pyruvic acid role is filled by S25. S25 bears the Pyruvic acid (Ser) mark. Residue T57 coordinates substrate. Residue Y58 is the Proton donor of the active site. A substrate-binding site is contributed by 73-75 (GAA). A disordered region spans residues 121–141 (ASAPVPGSRTERSPQAVVAGG).

Belongs to the PanD family. Heterooctamer of four alpha and four beta subunits. It depends on pyruvate as a cofactor. Is synthesized initially as an inactive proenzyme, which is activated by self-cleavage at a specific serine bond to produce a beta-subunit with a hydroxyl group at its C-terminus and an alpha-subunit with a pyruvoyl group at its N-terminus.

It localises to the cytoplasm. It carries out the reaction L-aspartate + H(+) = beta-alanine + CO2. It participates in cofactor biosynthesis; (R)-pantothenate biosynthesis; beta-alanine from L-aspartate: step 1/1. In terms of biological role, catalyzes the pyruvoyl-dependent decarboxylation of aspartate to produce beta-alanine. This is Aspartate 1-decarboxylase from Streptomyces griseus subsp. griseus (strain JCM 4626 / CBS 651.72 / NBRC 13350 / KCC S-0626 / ISP 5235).